Reading from the N-terminus, the 428-residue chain is Phosphoribosylamine--glycine ligase (428 aa).

One can recognise an ATP-grasp domain in the interval 109-316 (KDFLHRHGIP…LVELCLAALD (208 aa)). Residue 135-196 (LRQVGAPVVV…EEFLTGEEAS (62 aa)) coordinates ATP. The tract at residues 211–235 (SSQDHKARDDGDRGPNTGGMGAYSP) is disordered. Basic and acidic residues predominate over residues 213–223 (QDHKARDDGDR). Mg(2+)-binding residues include Glu-286 and Asn-288.

Belongs to the GARS family. It depends on Mg(2+) as a cofactor. Mn(2+) is required as a cofactor.

The catalysed reaction is 5-phospho-beta-D-ribosylamine + glycine + ATP = N(1)-(5-phospho-beta-D-ribosyl)glycinamide + ADP + phosphate + H(+). It functions in the pathway purine metabolism; IMP biosynthesis via de novo pathway; N(1)-(5-phospho-D-ribosyl)glycinamide from 5-phospho-alpha-D-ribose 1-diphosphate: step 2/2. The chain is Phosphoribosylamine--glycine ligase (purD) from Allochromatium vinosum (strain ATCC 17899 / DSM 180 / NBRC 103801 / NCIMB 10441 / D) (Chromatium vinosum).